A 103-amino-acid chain; its full sequence is Small ribosomal subunit protein uS10 (103 aa).

The protein belongs to the universal ribosomal protein uS10 family. In terms of assembly, part of the 30S ribosomal subunit.

Its function is as follows. Involved in the binding of tRNA to the ribosomes. The protein is Small ribosomal subunit protein uS10 of Shewanella baltica (strain OS223).